Consider the following 294-residue polypeptide: Mitochondrial glycine transporter (294 aa).

Solcar repeat units follow at residues 5–84 (RRAT…IRQA), 102–186 (LNMY…MKVL), and 208–292 (ASTL…IVKK). A run of 6 helical transmembrane segments spans residues 11-36 (LIGGFSGGLVSAIILQPFDLLKTRLQ), 59-85 (GALPSCIRTSVGSAMYLTMLNSIRQAI), 108-133 (MFSGAVTRALTGLITMPITVIKVRYE), 161-184 (GFGATALRDAPYAGLYMLFYDRMK), 212-238 (INGSSAFSAAVIATSITAPFDTVKTRM), and 267-285 (GISLRLTRKAFSAGIAWGI).

It belongs to the mitochondrial carrier (TC 2.A.29) family. SLC25A38 subfamily.

Its subcellular location is the mitochondrion inner membrane. The catalysed reaction is glycine(in) = glycine(out). Mitochondrial glycine transporter that imports glycine into the mitochondrial matrix. Plays an important role in providing glycine for the first enzymatic step in heme biosynthesis, the condensation of glycine with succinyl-CoA to produce 5-aminolevulinate (ALA) in the mitochondrial matrix. The chain is Mitochondrial glycine transporter from Kluyveromyces lactis (strain ATCC 8585 / CBS 2359 / DSM 70799 / NBRC 1267 / NRRL Y-1140 / WM37) (Yeast).